The chain runs to 365 residues: S-adenosylmethionine:tRNA ribosyltransferase-isomerase (365 aa).

It belongs to the QueA family. As to quaternary structure, monomer.

Its subcellular location is the cytoplasm. It catalyses the reaction 7-aminomethyl-7-carbaguanosine(34) in tRNA + S-adenosyl-L-methionine = epoxyqueuosine(34) in tRNA + adenine + L-methionine + 2 H(+). It functions in the pathway tRNA modification; tRNA-queuosine biosynthesis. Its function is as follows. Transfers and isomerizes the ribose moiety from AdoMet to the 7-aminomethyl group of 7-deazaguanine (preQ1-tRNA) to give epoxyqueuosine (oQ-tRNA). This is S-adenosylmethionine:tRNA ribosyltransferase-isomerase from Rickettsia africae (strain ESF-5).